The sequence spans 128 residues: uncharacterized protein (128 aa).

This is an uncharacterized protein from Methanocaldococcus jannaschii (strain ATCC 43067 / DSM 2661 / JAL-1 / JCM 10045 / NBRC 100440) (Methanococcus jannaschii).